The sequence spans 730 residues: Synaptotagmin-like protein 5 (730 aa).

The RabBD domain occupies 7 to 123; sequence FINLSFLLDH…IITGEWFFEE (117 aa). The segment at 64 to 106 adopts an FYVE-type zinc-finger fold; the sequence is CVHCHRNLGLIFDRGDPCQACSLRVCRECRVAGPNGSWKCTVC. Phosphoserine is present on serine 147. Disordered regions lie at residues 147–188, 217–271, and 294–355; these read SPGA…GFLL, QHFR…TRTV, and SQEL…LDKD. Polar residues-rich tracts occupy residues 248–271 and 305–322; these read PKSS…TRTV and TSGT…SSDQ. C2 domains follow at residues 406–527 and 563–694; these read VSGE…DEWF and PPEQ…VDWM.

In terms of assembly, binds RAB27A that has been activated by GTP-binding, and possibly also RAB3A and RAB6A. As to expression, highly expressed in placenta and liver.

The protein resides in the membrane. Its function is as follows. May act as Rab effector protein and play a role in vesicle trafficking. Binds phospholipids. The protein is Synaptotagmin-like protein 5 (SYTL5) of Homo sapiens (Human).